The sequence spans 525 residues: Alcohol O-acetyltransferase 1 (525 aa).

Positions 24–41 (GHARRMGSVEDLYVALNR) are membrane association. Residues His-191 and Asp-195 each act as charge relay system in the active site. A membrane association region spans residues 508–525 (QESLEELCSIYKALLLGP).

This sequence belongs to the ATF1 alcohol acetyltransferase family.

The protein resides in the lipid droplet. It localises to the endoplasmic reticulum membrane. The catalysed reaction is an aliphatic alcohol + acetyl-CoA = an acetyl ester + CoA. The enzyme catalyses a fatty acyl-CoA + H2O = a fatty acid + CoA + H(+). It catalyses the reaction 3-methylbutanol + acetyl-CoA = 3-methylbutyl acetate + CoA. With respect to regulation, found to be inhibited by cadmium, copper, zinc and mercurium divalent cations and sulfhydryl reagents. Inhibited by the addition of unsaturated fatty acids to the culture. In terms of biological role, major alcohol O-acetyltransferase that uses acetyl-CoA to synthesize acetate esters from various alcohols, producing ethyl acetate, isoamyl acetate, isobutyl acetate, butyl acetate, hexyl acetate, heptyl acetate and octyl acetate. The alcohol acyltransferase activity is promiscuous with regard to alcohol but relatively specific for acetyl-CoA since ATF1 does not use any other acyl-CoAs (C3, C4, C5, C6, C8, C10, C12). Acts also as an efficient thioesterase in vitro with specificity towards medium-chain-length acyl-CoAs. In natural environments, the production of aromatic volatile metabolites promotes dispersal through insect vectors. The polypeptide is Alcohol O-acetyltransferase 1 (Saccharomyces cerevisiae (strain ATCC 204508 / S288c) (Baker's yeast)).